Consider the following 120-residue polypeptide: MDQLIQLVEATQPGVECPALNPGDTVRIQLRVIEGEKERLQAFEGVVISDRGAGASKTITVRKISHGVGVERIIPVNSPNIESVTVLKHGKARRSKLFYLRKRTGKAALKVKERKVSEQA.

The protein belongs to the bacterial ribosomal protein bL19 family.

Its function is as follows. This protein is located at the 30S-50S ribosomal subunit interface and may play a role in the structure and function of the aminoacyl-tRNA binding site. This is Large ribosomal subunit protein bL19 from Chlorobium luteolum (strain DSM 273 / BCRC 81028 / 2530) (Pelodictyon luteolum).